Reading from the N-terminus, the 660-residue chain is V-type ATP synthase subunit I (660 aa).

Helical transmembrane passes span 312 to 332 (FFAF…GLLF), 362 to 382 (ILGL…GMSF), 453 to 473 (FIDN…LSLG), 485 to 505 (IGWI…LGTV), 520 to 540 (GQIG…LAMI), 560 to 580 (VLSY…GATF), and 593 to 613 (SIVI…GGVI).

It belongs to the V-ATPase 116 kDa subunit family.

The protein resides in the cell membrane. Functionally, produces ATP from ADP in the presence of a proton gradient across the membrane. This chain is V-type ATP synthase subunit I (atpI), found in Chlamydia pneumoniae (Chlamydophila pneumoniae).